We begin with the raw amino-acid sequence, 473 residues long: Thermostable beta-glucosidase B (473 aa).

Glutamate 196 serves as the catalytic Proton donor. Glutamate 378 acts as the Nucleophile in catalysis.

It belongs to the glycosyl hydrolase 1 family.

It is found in the cytoplasm. It carries out the reaction Hydrolysis of terminal, non-reducing beta-D-glucosyl residues with release of beta-D-glucose.. The chain is Thermostable beta-glucosidase B (bglB) from Thermobispora bispora (Microbispora bispora).